The primary structure comprises 593 residues: NADH-quinone oxidoreductase subunit C/D 1 (593 aa).

Positions 1-193 are NADH dehydrogenase I subunit C; sequence MPWAKEGDLQ…DNLEGLMNYD (193 aa). The interval 217–593 is NADH dehydrogenase I subunit D; the sequence is AQIVLNWGPL…IDPVVGETDR (377 aa).

The protein in the N-terminal section; belongs to the complex I 30 kDa subunit family. In the C-terminal section; belongs to the complex I 49 kDa subunit family. As to quaternary structure, NDH-1 is composed of 13 different subunits. Subunits NuoB, CD, E, F, and G constitute the peripheral sector of the complex.

The protein resides in the cell inner membrane. The catalysed reaction is a quinone + NADH + 5 H(+)(in) = a quinol + NAD(+) + 4 H(+)(out). NDH-1 shuttles electrons from NADH, via FMN and iron-sulfur (Fe-S) centers, to quinones in the respiratory chain. The immediate electron acceptor for the enzyme in this species is believed to be ubiquinone. Couples the redox reaction to proton translocation (for every two electrons transferred, four hydrogen ions are translocated across the cytoplasmic membrane), and thus conserves the redox energy in a proton gradient. This Aquifex aeolicus (strain VF5) protein is NADH-quinone oxidoreductase subunit C/D 1 (nuoC1).